Consider the following 542-residue polypeptide: ATP synthase subunit alpha (542 aa).

173 to 180 contributes to the ATP binding site; that stretch reads GDRQTGKT. Residues 518 to 542 form a disordered region; the sequence is PLVEKKPDEKHTTPVEQEKIVAGEK. Positions 519–542 are enriched in basic and acidic residues; it reads LVEKKPDEKHTTPVEQEKIVAGEK.

Belongs to the ATPase alpha/beta chains family. In terms of assembly, F-type ATPases have 2 components, CF(1) - the catalytic core - and CF(0) - the membrane proton channel. CF(1) has five subunits: alpha(3), beta(3), gamma(1), delta(1), epsilon(1). CF(0) has three main subunits: a(1), b(2) and c(9-12). The alpha and beta chains form an alternating ring which encloses part of the gamma chain. CF(1) is attached to CF(0) by a central stalk formed by the gamma and epsilon chains, while a peripheral stalk is formed by the delta and b chains.

The protein resides in the cell membrane. The enzyme catalyses ATP + H2O + 4 H(+)(in) = ADP + phosphate + 5 H(+)(out). Its function is as follows. Produces ATP from ADP in the presence of a proton gradient across the membrane. The alpha chain is a regulatory subunit. This Bifidobacterium adolescentis (strain ATCC 15703 / DSM 20083 / NCTC 11814 / E194a) protein is ATP synthase subunit alpha.